The primary structure comprises 212 residues: Octanoyltransferase (212 aa).

The BPL/LPL catalytic domain occupies 31–209 (AETQDEIWLV…HFADLLGYNI (179 aa)). Substrate-binding positions include 70–77 (RGGQITYH), 138–140 (SLG), and 151–153 (GLA). Catalysis depends on cysteine 169, which acts as the Acyl-thioester intermediate.

Belongs to the LipB family.

Its subcellular location is the cytoplasm. The catalysed reaction is octanoyl-[ACP] + L-lysyl-[protein] = N(6)-octanoyl-L-lysyl-[protein] + holo-[ACP] + H(+). It functions in the pathway protein modification; protein lipoylation via endogenous pathway; protein N(6)-(lipoyl)lysine from octanoyl-[acyl-carrier-protein]: step 1/2. In terms of biological role, catalyzes the transfer of endogenously produced octanoic acid from octanoyl-acyl-carrier-protein onto the lipoyl domains of lipoate-dependent enzymes. Lipoyl-ACP can also act as a substrate although octanoyl-ACP is likely to be the physiological substrate. The chain is Octanoyltransferase from Haemophilus influenzae (strain PittEE).